The chain runs to 387 residues: Monopolar spindle protein 2 (387 aa).

The stretch at 157 to 269 (KNIGKALEVQ…FLKDQIRRER (113 aa)) forms a coiled coil. Residues 216–235 (RQVEDNQNSSRTSDPGSPLV) form a disordered region. Residues 220-230 (DNQNSSRTSDP) are compositionally biased toward polar residues. Residues 311-327 (IRIIVCFALLAGVLPYI) traverse the membrane as a helical segment.

It belongs to the MPS2 family. As to quaternary structure, interacts with BBP1, MPS3, and SPC24.

It is found in the nucleus membrane. Its subcellular location is the cytoplasm. The protein resides in the cytoskeleton. The protein localises to the microtubule organizing center. It localises to the spindle pole body. Its function is as follows. Component of the spindle pole body (SPB) required for insertion of the nascent SPB into the nuclear envelope and for the proper execution of spindle pole body (SPB) duplication. The polypeptide is Monopolar spindle protein 2 (MPS2) (Saccharomyces cerevisiae (strain FostersB) (Baker's yeast)).